The chain runs to 341 residues: MDHAADATRTDLMTITRFVLNEQSKRPESRGDFTILMSHIVLGCKFVCSAVNKAGLAKLIGLAGETNIQGEEQKKLDVLSNEVFIKALISSGRTCILVSEEDEEATFVEPSLRGKYCVVFDPLDGCSNIDCGVSIGTIFGIYMVKDLNNATLDDVLQPGKNMVAAGYCMYGSSCTLVMSTGSGVNGFTHDPSLGEFILTHPDIKIPKKGKIYSVNEGNAKNWDGPTTKYVEKCKFPKDGSSPKSLRYIGSMVADVHRTLLYGGIFMYPGDKKSPNGKLRVLYEVFPMSFLMEQAGGQAFTGEQRALDLVPKNIHDRSPVFLGSYDDVEDIKALYAAEQKNA.

Residues glutamate 71, glutamate 100, aspartate 121, leucine 123, and aspartate 124 each contribute to the Mg(2+) site. Substrate-binding positions include 124-127 (DGCS), asparagine 215, tyrosine 247, tyrosine 267, and lysine 277. Glutamate 283 is a Mg(2+) binding site.

This sequence belongs to the FBPase class 1 family. Mg(2+) serves as cofactor.

The protein localises to the cytoplasm. The enzyme catalyses beta-D-fructose 1,6-bisphosphate + H2O = beta-D-fructose 6-phosphate + phosphate. In Beta vulgaris (Sugar beet), this protein is Fructose-1,6-bisphosphatase, cytosolic.